The primary structure comprises 589 residues: MALATQSNRIKIGIRPTIDGRRMGVRESLETQTIRMAQSVAQLLQTHIRYTDSTFVECVVADSTIGGVAEAAACADKFKRENVGLTITVTPCWCYGSETIDMDPHMPKAIWGFNGTERPGAVYLAAALAGHSQLGLPAFSIYGTEVQEADDTNIPEDVKEKLLRFARAGLAVASIRGKSYLSIGSVSMGIAGSIVNQAFFQEYLGMRNEYVDMMEIKRRLDRKIYDQEEVDLALSWVKQYCKEGVDVNSLENQRNAEERAELWENVVKMTIITRDLMVGNPKLATLNYAEEALGHNAIAAGFQGQRHWTDHLPNGDFMEAMLNSTYDWNGVRPPYILATENDSLNAIGMLFGHQLTGKAQIFADVRTYWSQDSVERVTGWRPESGFIHLINSGSAALDGTGEHQDAQGNPTLKPAWDVTEEEAKRCLENTRWCPAVHEYFRGGGLSSQFLTKGGIPFTMHRINLIKGLGPVLQIAEGWSIDLPQDVHNKLNQRTNETWPTTWFVPRLTGKGAFTDVYSVMANWGANHCVATHGHVGADLITLASMLRIPVCMHNVSEKNIFRPSAWNGFGQDKEGQDYRACQNFGPLYK.

Catalysis depends on proton acceptor residues Glu-340 and Asp-364. Positions 340, 364, and 527 each coordinate Mn(2+).

This sequence belongs to the L-fucose isomerase family. Mn(2+) is required as a cofactor.

Its subcellular location is the cytoplasm. The catalysed reaction is L-fucose = L-fuculose. It functions in the pathway carbohydrate degradation; L-fucose degradation; L-lactaldehyde and glycerone phosphate from L-fucose: step 1/3. Functionally, converts the aldose L-fucose into the corresponding ketose L-fuculose. The chain is L-fucose isomerase from Haemophilus influenzae (strain PittEE).